The primary structure comprises 164 residues: 6,7-dimethyl-8-ribityllumazine synthase (164 aa).

5-amino-6-(D-ribitylamino)uracil contacts are provided by residues Phe-24, 58-60 (ALE), and 82-84 (AVI). 87–88 (ET) is a (2S)-2-hydroxy-3-oxobutyl phosphate binding site. His-90 serves as the catalytic Proton donor. 5-amino-6-(D-ribitylamino)uracil is bound at residue Asn-115. Arg-129 lines the (2S)-2-hydroxy-3-oxobutyl phosphate pocket.

It belongs to the DMRL synthase family.

The enzyme catalyses (2S)-2-hydroxy-3-oxobutyl phosphate + 5-amino-6-(D-ribitylamino)uracil = 6,7-dimethyl-8-(1-D-ribityl)lumazine + phosphate + 2 H2O + H(+). Its pathway is cofactor biosynthesis; riboflavin biosynthesis; riboflavin from 2-hydroxy-3-oxobutyl phosphate and 5-amino-6-(D-ribitylamino)uracil: step 1/2. In terms of biological role, catalyzes the formation of 6,7-dimethyl-8-ribityllumazine by condensation of 5-amino-6-(D-ribitylamino)uracil with 3,4-dihydroxy-2-butanone 4-phosphate. This is the penultimate step in the biosynthesis of riboflavin. The protein is 6,7-dimethyl-8-ribityllumazine synthase of Ralstonia nicotianae (strain ATCC BAA-1114 / GMI1000) (Ralstonia solanacearum).